We begin with the raw amino-acid sequence, 397 residues long: GDNF family receptor alpha-3 (397 aa).

The N-terminal stretch at 1–28 is a signal peptide; it reads MGLSWSPRPPLLMILLLVLSLWLPLGAG. C48 and C54 are joined by a disulfide. N92 and N145 each carry an N-linked (GlcNAc...) asparagine glycan. 10 cysteine pairs are disulfide-bonded: C159/C215, C166/C172, C183/C193, C188/C236, C217/C224, C245/C313, C252/C258, C269/C285, C278/C337, and C315/C325. N306 is a glycosylation site (N-linked (GlcNAc...) asparagine). The GPI-anchor amidated asparagine moiety is linked to residue N371. A propeptide spans 372-397 (removed in mature form); sequence PALRLQPRLPILSFSILPLILLQTLW.

This sequence belongs to the GDNFR family. In terms of assembly, interacts with ARTN ligand and RET: forms a 2:2:2 ternary complex composed of ARTN ligand, GFRA3 and RET receptor. Interacts with SORL1.

The protein localises to the cell membrane. In terms of biological role, receptor for artemin (ARTN), a growth factor that supports the survival of sensory and sympathetic peripheral neurons. ARTN-binding leads to autophosphorylation and activation of the RET receptor. In Mus musculus (Mouse), this protein is GDNF family receptor alpha-3 (Gfra3).